A 298-amino-acid polypeptide reads, in one-letter code: Formylmethanofuran--tetrahydromethanopterin formyltransferase (298 aa).

This sequence belongs to the FTR family. As to quaternary structure, homotetramer.

The protein localises to the cytoplasm. The enzyme catalyses N-formylmethanofuran + 5,6,7,8-tetrahydromethanopterin + H(+) = N(5)-formyl-5,6,7,8-tetrahydromethanopterin + methanofuran. Its pathway is one-carbon metabolism; formaldehyde degradation; formate from formaldehyde (H(4)MPT route): step 4/5. In terms of biological role, catalyzes the transfer of a formyl group from 5-formyl tetrahydromethanopterin (5-formyl-H(4)MPT) to methanofuran (MFR) to produce formylmethanofuran (formyl-MFR) and tetrahydromethanopterin (H(4)MPT). In Methylococcus capsulatus (strain ATCC 33009 / NCIMB 11132 / Bath), this protein is Formylmethanofuran--tetrahydromethanopterin formyltransferase.